A 495-amino-acid polypeptide reads, in one-letter code: Cobyric acid synthase (495 aa).

The 188-residue stretch at 252–439 (RIRIAAPMLS…VHGLFAQDAF (188 aa)) folds into the GATase cobBQ-type domain. Cys-334 functions as the Nucleophile in the catalytic mechanism. His-431 is a catalytic residue.

The protein belongs to the CobB/CobQ family. CobQ subfamily.

The protein operates within cofactor biosynthesis; adenosylcobalamin biosynthesis. Functionally, catalyzes amidations at positions B, D, E, and G on adenosylcobyrinic A,C-diamide. NH(2) groups are provided by glutamine, and one molecule of ATP is hydrogenolyzed for each amidation. In Hyphomonas neptunium (strain ATCC 15444), this protein is Cobyric acid synthase.